Here is a 233-residue protein sequence, read N- to C-terminus: ATP synthase subunit a (233 aa).

Helical transmembrane passes span 29–49, 60–80, 89–109, 115–135, 143–163, 185–205, and 206–226; these read FKHV…SFIV, LQNI…SITG, VLIV…VPGF, NINT…YIGI, IKHF…LELI, FVLI…IYFL, and FTLA…IYLK.

It belongs to the ATPase A chain family. F-type ATPases have 2 components, CF(1) - the catalytic core - and CF(0) - the membrane proton channel. CF(1) has five subunits: alpha(3), beta(3), gamma(1), delta(1), epsilon(1). CF(0) has three main subunits: a(1), b(2) and c(9-12). The alpha and beta chains form an alternating ring which encloses part of the gamma chain. CF(1) is attached to CF(0) by a central stalk formed by the gamma and epsilon chains, while a peripheral stalk is formed by the delta and b chains.

The protein resides in the cell inner membrane. Its function is as follows. Key component of the proton channel; it plays a direct role in the translocation of protons across the membrane. This chain is ATP synthase subunit a, found in Oleidesulfovibrio alaskensis (strain ATCC BAA-1058 / DSM 17464 / G20) (Desulfovibrio alaskensis).